A 424-amino-acid chain; its full sequence is Phosphomethylpyrimidine synthase (424 aa).

Substrate-binding positions include N66, M95, Y124, H163, 185 to 187, 226 to 229, and E265; these read SRG and DGMR. H269 serves as a coordination point for Zn(2+). F292 serves as a coordination point for substrate. Residue H333 participates in Zn(2+) binding. Residues C408, C411, and C415 each contribute to the [4Fe-4S] cluster site.

The protein belongs to the ThiC family. It depends on [4Fe-4S] cluster as a cofactor.

The enzyme catalyses 5-amino-1-(5-phospho-beta-D-ribosyl)imidazole + S-adenosyl-L-methionine = 4-amino-2-methyl-5-(phosphooxymethyl)pyrimidine + CO + 5'-deoxyadenosine + formate + L-methionine + 3 H(+). It functions in the pathway cofactor biosynthesis; thiamine diphosphate biosynthesis. Functionally, catalyzes the synthesis of the hydroxymethylpyrimidine phosphate (HMP-P) moiety of thiamine from aminoimidazole ribotide (AIR) in a radical S-adenosyl-L-methionine (SAM)-dependent reaction. The protein is Phosphomethylpyrimidine synthase of Thermotoga petrophila (strain ATCC BAA-488 / DSM 13995 / JCM 10881 / RKU-1).